Consider the following 88-residue polypeptide: Putative membrane protein insertion efficiency factor (88 aa).

The tract at residues 64-88 (GVDPVPKKSSSKKTSSTTACGCGHS) is disordered.

Belongs to the UPF0161 family.

The protein resides in the cell inner membrane. Its function is as follows. Could be involved in insertion of integral membrane proteins into the membrane. This Herminiimonas arsenicoxydans protein is Putative membrane protein insertion efficiency factor.